The following is a 128-amino-acid chain: MYDNLKSLGITNPEEIDRYSLRQEANNDILKIYFQKDKGEFFAKSVKFKYPRQRKTVVADGVGQGYKEVQEISPNLRYIIDELDQICQRDRSEVDLKRKILDDLRHLESVVTNKISEIEADLEKLTRK.

This sequence belongs to the UPF0325 family.

This is UPF0325 protein YaeH from Shigella boydii serotype 18 (strain CDC 3083-94 / BS512).